We begin with the raw amino-acid sequence, 159 residues long: Eukaryotic translation initiation factor 5A-2 (159 aa).

Residues 1-12 (MSDEEHQFESKA) are compositionally biased toward basic and acidic residues. A disordered region spans residues 1–23 (MSDEEHQFESKADAGASKTYPQQ). At K52 the chain carries Hypusine.

This sequence belongs to the eIF-5A family. Post-translationally, lys-52 undergoes hypusination, a unique post-translational modification that consists in the addition of a butylamino group from spermidine to lysine side chain, leading to the formation of the unusual amino acid hypusine. eIF-5As are the only known proteins to undergo this modification, which is essential for their function.

Its function is as follows. Translation factor that promotes translation elongation and termination, particularly upon ribosome stalling at specific amino acid sequence contexts. Binds between the exit (E) and peptidyl (P) site of the ribosome and promotes rescue of stalled ribosome: specifically required for efficient translation of polyproline-containing peptides as well as other motifs that stall the ribosome. Acts as a ribosome quality control (RQC) cofactor by joining the RQC complex to facilitate peptidyl transfer during CAT tailing step. The chain is Eukaryotic translation initiation factor 5A-2 (EIF-5A2) from Nicotiana plumbaginifolia (Leadwort-leaved tobacco).